A 782-amino-acid chain; its full sequence is Endonuclease MutS2 (782 aa).

ATP is bound at residue Gly-336–Thr-343. Residues Leu-707 to Lys-782 enclose the Smr domain.

It belongs to the DNA mismatch repair MutS family. MutS2 subfamily. Homodimer. Binds to stalled ribosomes, contacting rRNA.

Endonuclease that is involved in the suppression of homologous recombination and thus may have a key role in the control of bacterial genetic diversity. Its function is as follows. Acts as a ribosome collision sensor, splitting the ribosome into its 2 subunits. Detects stalled/collided 70S ribosomes which it binds and splits by an ATP-hydrolysis driven conformational change. Acts upstream of the ribosome quality control system (RQC), a ribosome-associated complex that mediates the extraction of incompletely synthesized nascent chains from stalled ribosomes and their subsequent degradation. Probably generates substrates for RQC. The chain is Endonuclease MutS2 from Staphylococcus epidermidis (strain ATCC 35984 / DSM 28319 / BCRC 17069 / CCUG 31568 / BM 3577 / RP62A).